The primary structure comprises 356 residues: Protein-arginine kinase (356 aa).

The 228-residue stretch at 22–249 (FRPISTLSLS…SKILSAETEA (228 aa)) folds into the Phosphagen kinase C-terminal domain. ATP-binding positions include 25–29 (ISTLS), 172–176 (VARAF), and 202–207 (SSLLPL).

The protein belongs to the ATP:guanido phosphotransferase family.

It carries out the reaction L-arginyl-[protein] + ATP = N(omega)-phospho-L-arginyl-[protein] + ADP + H(+). Its function is as follows. Catalyzes the specific phosphorylation of arginine residues in proteins. In Chlamydia muridarum (strain MoPn / Nigg), this protein is Protein-arginine kinase.